Here is a 379-residue protein sequence, read N- to C-terminus: 23S rRNA (uracil(747)-C(5))-methyltransferase RlmC (379 aa).

4 residues coordinate [4Fe-4S] cluster: Cys3, Cys11, Cys14, and Cys87. S-adenosyl-L-methionine is bound by residues Gln212, Phe241, Glu262, and Asn309. Residue Cys336 is the Nucleophile of the active site.

The protein belongs to the class I-like SAM-binding methyltransferase superfamily. RNA M5U methyltransferase family. RlmC subfamily.

The catalysed reaction is uridine(747) in 23S rRNA + S-adenosyl-L-methionine = 5-methyluridine(747) in 23S rRNA + S-adenosyl-L-homocysteine + H(+). Functionally, catalyzes the formation of 5-methyl-uridine at position 747 (m5U747) in 23S rRNA. The protein is 23S rRNA (uracil(747)-C(5))-methyltransferase RlmC of Shewanella loihica (strain ATCC BAA-1088 / PV-4).